The chain runs to 217 residues: Peptide methionine sulfoxide reductase MsrA (217 aa).

Residue Cys56 is part of the active site.

This sequence belongs to the MsrA Met sulfoxide reductase family.

The enzyme catalyses L-methionyl-[protein] + [thioredoxin]-disulfide + H2O = L-methionyl-(S)-S-oxide-[protein] + [thioredoxin]-dithiol. The catalysed reaction is [thioredoxin]-disulfide + L-methionine + H2O = L-methionine (S)-S-oxide + [thioredoxin]-dithiol. Has an important function as a repair enzyme for proteins that have been inactivated by oxidation. Catalyzes the reversible oxidation-reduction of methionine sulfoxide in proteins to methionine. This is Peptide methionine sulfoxide reductase MsrA from Corynebacterium melassecola.